The primary structure comprises 795 residues: MKFSEQWVREWVNPAVSTEQLCEQITMLGLEVDGVEAVAGTFNGVVVGEVVECAQHPDADKLRVTKVNVGGDRLLDIVCGAPNCRQGLKVACATEGAVLPGDFKIKKTKLRGQPSEGMLCSFSELGIDVEADGIIELPLDAPIGTDLREYLALDDNAIEISLTPNRADCLSIAGIAREIGVVNKQLVNQLHFEAAPATISDKVQIDLQAPEACPRYLLRVIKNVNVKAPSPMWMQEKLRRCGIRSIDPIVDITNYILLEFGQPMHAFDAAKVTQPVQVRFAKEGEELVLLDGSTAKLQSNTLLIADQNGPLAMAGIFGGAASGVNSETKDVILESAFFAPLAIAGRARQYGLHTDASHRFERGVDFELARKAMERATALLLEICGGEAGEICEASSETHLPKVNTVQLRRSKLDALLGHHIETGSVTEIFHRLGFDVTYANDIWTVTSASWRFDIEIEEDLIEEVARIYGYNSIPNNAPLAHLCMREHKESDLDLARIKTALVDADYQEAITYSFVDPKIQSLLHPHQEALVLPNPISVEMSAMRVSLISGLLGAVLYNQNRQQSRVRLFETGLRFVPDANAEFGVRQEFVLSAVITGTAKSEHWAGKAESVDFFDLKGDLESVLSLTEGGHRVRFVAKQFDALHPGQSAAIELDGQEIGFIGAIHPSISQKLGLNGKTFVFEILWNAIAARNVVQAKEISKFPANRRDLALVVADSVPAGELIAACKQAGGEKLVQVNLFDVYQGVGVAEGYKSLAISLTVQDNEKTLEDEEINAVISAVLAEVKQRFNAELRD.

Residues 39-148 (AGTFNGVVVG…LDAPIGTDLR (110 aa)) form the tRNA-binding domain. In terms of domain architecture, B5 spans 401-476 (PKVNTVQLRR…RIYGYNSIPN (76 aa)). Mg(2+) contacts are provided by Asp-454, Asp-460, Glu-463, and Glu-464. In terms of domain architecture, FDX-ACB spans 701–794 (SKFPANRRDL…VKQRFNAELR (94 aa)).

Belongs to the phenylalanyl-tRNA synthetase beta subunit family. Type 1 subfamily. As to quaternary structure, tetramer of two alpha and two beta subunits. Requires Mg(2+) as cofactor.

The protein localises to the cytoplasm. The enzyme catalyses tRNA(Phe) + L-phenylalanine + ATP = L-phenylalanyl-tRNA(Phe) + AMP + diphosphate + H(+). The protein is Phenylalanine--tRNA ligase beta subunit (pheT) of Haemophilus influenzae (strain ATCC 51907 / DSM 11121 / KW20 / Rd).